A 710-amino-acid polypeptide reads, in one-letter code: Subtilisin-like protease SBT4.8 (710 aa).

An N-terminal signal peptide occupies residues 1–23; sequence MVKRASFCLLSCLIILFLSSVSA. Positions 24–111 are cleaved as a propeptide — activation peptide; sequence IIYDPQDKQV…VFRSKNYKLQ (88 aa). The 78-residue stretch at 33–110 folds into the Inhibitor I9 domain; the sequence is VYVVYMGSLP…SVFRSKNYKL (78 aa). Residues 115–559 enclose the Peptidase S8 domain; it reads SWDFMGMKEG…AGHVDPIAAI (445 aa). Catalysis depends on Asp-143, which acts as the Charge relay system. The N-linked (GlcNAc...) asparagine glycan is linked to Asn-174. His-198 acts as the Charge relay system in catalysis. N-linked (GlcNAc...) asparagine glycosylation is found at Asn-221, Asn-364, and Asn-419. Positions 354–414 constitute a PA domain; the sequence is KYPLEYGDYL…VLSQDDFDSL (61 aa). Ser-498 (charge relay system) is an active-site residue. N-linked (GlcNAc...) asparagine glycans are attached at residues Asn-535, Asn-568, Asn-580, Asn-618, and Asn-636.

This sequence belongs to the peptidase S8 family. The C-terminal propeptide is autocleaved.

The protein resides in the secreted. In Arabidopsis thaliana (Mouse-ear cress), this protein is Subtilisin-like protease SBT4.8.